The sequence spans 939 residues: U3 small nucleolar RNA-associated protein 21 (939 aa).

An N-acetylserine modification is found at serine 2. 14 WD repeats span residues 40–71 (ATGT…LLFV), 81–111 (VALS…HLLE), 119–158 (EHLC…TKLT), 168–201 (VSLQ…LVFT), 208–245 (QITT…RTIK), 252–287 (SSLS…IHVL), 295–347 (YGGV…RSRG), 354–388 (SYIA…QSQE), 415–454 (VALA…GRWT), 463–497 (VKSV…LRKK), 505–541 (VTGI…GKLK), 546–581 (ITAM…VRQL), 583–624 (GHSN…DGII), and 626–664 (DNVA…KTVS). Serine 772 bears the Phosphoserine mark.

Interacts with snoRNA U3. Interacts with MPP10. Interacts (via WD repeats) with UTP18. Component of the ribosomal small subunit (SSU) processome composed of at least 40 protein subunits and snoRNA U3.

It is found in the nucleus. It localises to the nucleolus. In terms of biological role, involved in nucleolar processing of pre-18S ribosomal RNA and ribosome assembly. The polypeptide is U3 small nucleolar RNA-associated protein 21 (UTP21) (Saccharomyces cerevisiae (strain ATCC 204508 / S288c) (Baker's yeast)).